The following is a 184-amino-acid chain: RNA polymerase sigma factor HrpL (184 aa).

The short motif at 49–62 (DILQCVFLEALRNE) is the Polymerase core binding element. The segment at residues 151–170 (YQETANTLGVPIGTVRSRLS) is a DNA-binding region (H-T-H motif).

This sequence belongs to the sigma-70 factor family. ECF subfamily.

Sigma factors are initiation factors that promote the attachment of RNA polymerase to specific initiation sites and are then released. This sigma factor is involved in the activation of hprD as well as other hrp loci which are involved in plant pathogenicity, hrmA and avr genes. The polypeptide is RNA polymerase sigma factor HrpL (hrpL) (Pseudomonas syringae pv. syringae).